The chain runs to 417 residues: Adenosylhomocysteinase (417 aa).

Substrate-binding residues include Thr-53, Asp-125, and Glu-149. 150–152 (TTT) serves as a coordination point for NAD(+). Residues Lys-179 and Asp-183 each coordinate substrate. Residues Asn-184, 213-218 (GYGWVG), Glu-236, Asn-271, 292-294 (AGH), and Asn-339 each bind NAD(+).

The protein belongs to the adenosylhomocysteinase family. It depends on NAD(+) as a cofactor.

Its subcellular location is the cytoplasm. The catalysed reaction is S-adenosyl-L-homocysteine + H2O = L-homocysteine + adenosine. The protein operates within amino-acid biosynthesis; L-homocysteine biosynthesis; L-homocysteine from S-adenosyl-L-homocysteine: step 1/1. Its function is as follows. May play a key role in the regulation of the intracellular concentration of adenosylhomocysteine. This is Adenosylhomocysteinase from Saccharolobus solfataricus (strain ATCC 35092 / DSM 1617 / JCM 11322 / P2) (Sulfolobus solfataricus).